Consider the following 413-residue polypeptide: 3-oxo-tetronate kinase (413 aa).

ATP is bound by residues Ser-254, 354–357 (GGET), and Gly-397.

It belongs to the four-carbon acid sugar kinase family.

The enzyme catalyses 3-dehydro-L-erythronate + ATP = 3-dehydro-4-O-phospho-L-erythronate + ADP + H(+). It carries out the reaction 3-dehydro-D-erythronate + ATP = 3-dehydro-4-O-phospho-D-erythronate + ADP + H(+). Catalyzes the ATP-dependent phosphorylation of 3-oxo-tetronate to 3-oxo-tetronate 4-phosphate. The protein is 3-oxo-tetronate kinase of Haemophilus influenzae (strain ATCC 51907 / DSM 11121 / KW20 / Rd).